The primary structure comprises 291 residues: Protease HtpX homolog (291 aa).

Helical transmembrane passes span 4 to 24 (IALFLITNLAVMAVLGITASL) and 38 to 58 (LGALLGFAMVMGFGGAFISLL). His144 is a Zn(2+) binding site. Residue Glu145 is part of the active site. His148 contributes to the Zn(2+) binding site. The next 2 membrane-spanning stretches (helical) occupy residues 159–179 (LIQGVMNTFVVFLSRAIGYFI) and 197–217 (VTTVVLDLLLGLVAAMIVAWF). Glu222 is a Zn(2+) binding site.

Belongs to the peptidase M48B family. Requires Zn(2+) as cofactor.

The protein localises to the cell inner membrane. In Leptothrix cholodnii (strain ATCC 51168 / LMG 8142 / SP-6) (Leptothrix discophora (strain SP-6)), this protein is Protease HtpX homolog.